A 353-amino-acid polypeptide reads, in one-letter code: Photosystem II protein D1 (353 aa).

Residue Thr2 is modified to N-acetylthreonine. At Thr2 the chain carries Phosphothreonine. 3 consecutive transmembrane segments (helical) span residues 29-46 (YIGW…TATS), 118-133 (HFLL…EWEL), and 142-156 (WIAV…AATA). His118 serves as a coordination point for chlorophyll a. Position 126 (Tyr126) interacts with pheophytin a. [CaMn4O5] cluster-binding residues include Asp170 and Glu189. The helical transmembrane segment at 197–218 (FHMLGVAGVFGGSLFSAMHGSL) threads the bilayer. Chlorophyll a is bound at residue His198. A quinone-binding positions include His215 and 264 to 265 (SF). Residue His215 participates in Fe cation binding. His272 is a Fe cation binding site. A helical membrane pass occupies residues 274-288 (FLAAWPVVGIWFTAL). The [CaMn4O5] cluster site is built by His332, Glu333, Asp342, and Ala344. A propeptide spanning residues 345–353 (AVEVPSTNG) is cleaved from the precursor.

The protein belongs to the reaction center PufL/M/PsbA/D family. In terms of assembly, PSII is composed of 1 copy each of membrane proteins PsbA, PsbB, PsbC, PsbD, PsbE, PsbF, PsbH, PsbI, PsbJ, PsbK, PsbL, PsbM, PsbT, PsbX, PsbY, PsbZ, Psb30/Ycf12, at least 3 peripheral proteins of the oxygen-evolving complex and a large number of cofactors. It forms dimeric complexes. The D1/D2 heterodimer binds P680, chlorophylls that are the primary electron donor of PSII, and subsequent electron acceptors. It shares a non-heme iron and each subunit binds pheophytin, quinone, additional chlorophylls, carotenoids and lipids. D1 provides most of the ligands for the Mn4-Ca-O5 cluster of the oxygen-evolving complex (OEC). There is also a Cl(-1) ion associated with D1 and D2, which is required for oxygen evolution. The PSII complex binds additional chlorophylls, carotenoids and specific lipids. is required as a cofactor. Tyr-161 forms a radical intermediate that is referred to as redox-active TyrZ, YZ or Y-Z. Post-translationally, C-terminally processed by CTPA; processing is essential to allow assembly of the oxygen-evolving complex and thus photosynthetic growth.

It localises to the plastid. The protein localises to the chloroplast thylakoid membrane. The enzyme catalyses 2 a plastoquinone + 4 hnu + 2 H2O = 2 a plastoquinol + O2. Its function is as follows. Photosystem II (PSII) is a light-driven water:plastoquinone oxidoreductase that uses light energy to abstract electrons from H(2)O, generating O(2) and a proton gradient subsequently used for ATP formation. It consists of a core antenna complex that captures photons, and an electron transfer chain that converts photonic excitation into a charge separation. The D1/D2 (PsbA/PsbD) reaction center heterodimer binds P680, the primary electron donor of PSII as well as several subsequent electron acceptors. The protein is Photosystem II protein D1 of Calycanthus floridus var. glaucus (Eastern sweetshrub).